A 336-amino-acid polypeptide reads, in one-letter code: Holliday junction branch migration complex subunit RuvB (336 aa).

The tract at residues Ala-4–Tyr-184 is large ATPase domain (RuvB-L). Residues Ile-23, Arg-24, Gly-65, Lys-68, Thr-69, Thr-70, Glu-131–Tyr-133, Arg-174, Tyr-184, and Arg-221 contribute to the ATP site. Thr-69 contacts Mg(2+). The interval Gln-185–Asn-255 is small ATPAse domain (RuvB-S). The interval Ala-258–Pro-336 is head domain (RuvB-H). Positions 294, 313, and 318 each coordinate DNA.

The protein belongs to the RuvB family. As to quaternary structure, homohexamer. Forms an RuvA(8)-RuvB(12)-Holliday junction (HJ) complex. HJ DNA is sandwiched between 2 RuvA tetramers; dsDNA enters through RuvA and exits via RuvB. An RuvB hexamer assembles on each DNA strand where it exits the tetramer. Each RuvB hexamer is contacted by two RuvA subunits (via domain III) on 2 adjacent RuvB subunits; this complex drives branch migration. In the full resolvosome a probable DNA-RuvA(4)-RuvB(12)-RuvC(2) complex forms which resolves the HJ.

Its subcellular location is the cytoplasm. It catalyses the reaction ATP + H2O = ADP + phosphate + H(+). Its function is as follows. The RuvA-RuvB-RuvC complex processes Holliday junction (HJ) DNA during genetic recombination and DNA repair, while the RuvA-RuvB complex plays an important role in the rescue of blocked DNA replication forks via replication fork reversal (RFR). RuvA specifically binds to HJ cruciform DNA, conferring on it an open structure. The RuvB hexamer acts as an ATP-dependent pump, pulling dsDNA into and through the RuvAB complex. RuvB forms 2 homohexamers on either side of HJ DNA bound by 1 or 2 RuvA tetramers; 4 subunits per hexamer contact DNA at a time. Coordinated motions by a converter formed by DNA-disengaged RuvB subunits stimulates ATP hydrolysis and nucleotide exchange. Immobilization of the converter enables RuvB to convert the ATP-contained energy into a lever motion, pulling 2 nucleotides of DNA out of the RuvA tetramer per ATP hydrolyzed, thus driving DNA branch migration. The RuvB motors rotate together with the DNA substrate, which together with the progressing nucleotide cycle form the mechanistic basis for DNA recombination by continuous HJ branch migration. Branch migration allows RuvC to scan DNA until it finds its consensus sequence, where it cleaves and resolves cruciform DNA. This is Holliday junction branch migration complex subunit RuvB from Shigella sonnei (strain Ss046).